A 196-amino-acid polypeptide reads, in one-letter code: Putative 3-methyladenine DNA glycosylase (196 aa).

This sequence belongs to the DNA glycosylase MPG family.

The protein is Putative 3-methyladenine DNA glycosylase of Bacillus velezensis (strain DSM 23117 / BGSC 10A6 / LMG 26770 / FZB42) (Bacillus amyloliquefaciens subsp. plantarum).